Reading from the N-terminus, the 369-residue chain is sn-glycerol-3-phosphate import ATP-binding protein UgpC 1 (369 aa).

The 231-residue stretch at 4–234 (ISIRGVKKNY…PVSRFVAGFV (231 aa)) folds into the ABC transporter domain. ATP is bound at residue 36-43 (GPSGCGKS).

It belongs to the ABC transporter superfamily. sn-glycerol-3-phosphate importer (TC 3.A.1.1.3) family. The complex is composed of two ATP-binding proteins (UgpC), two transmembrane proteins (UgpA and UgpE) and a solute-binding protein (UgpB).

Its subcellular location is the cell inner membrane. The catalysed reaction is sn-glycerol 3-phosphate(out) + ATP + H2O = sn-glycerol 3-phosphate(in) + ADP + phosphate + H(+). In terms of biological role, part of the ABC transporter complex UgpBAEC involved in sn-glycerol-3-phosphate (G3P) import. Responsible for energy coupling to the transport system. This Rhizobium johnstonii (strain DSM 114642 / LMG 32736 / 3841) (Rhizobium leguminosarum bv. viciae) protein is sn-glycerol-3-phosphate import ATP-binding protein UgpC 1.